The following is a 318-amino-acid chain: NADH-ubiquinone oxidoreductase chain 1 (318 aa).

Helical transmembrane passes span 2–22 (FMIN…FLTL), 68–88 (ISMF…MWTP), 100–120 (LGVL…LWSG), 146–166 (LAII…PTLI), 171–191 (HMWL…STLA), 222–242 (LFFL…TILF), 253–273 (ELYT…FLWV), and 293–313 (FLPL…ITAG).

Belongs to the complex I subunit 1 family. In terms of assembly, core subunit of respiratory chain NADH dehydrogenase (Complex I) which is composed of 45 different subunits.

Its subcellular location is the mitochondrion inner membrane. It catalyses the reaction a ubiquinone + NADH + 5 H(+)(in) = a ubiquinol + NAD(+) + 4 H(+)(out). Core subunit of the mitochondrial membrane respiratory chain NADH dehydrogenase (Complex I) which catalyzes electron transfer from NADH through the respiratory chain, using ubiquinone as an electron acceptor. Essential for the catalytic activity and assembly of complex I. In Hipposideros diadema (Diadem leaf-nosed bat), this protein is NADH-ubiquinone oxidoreductase chain 1 (MT-ND1).